The primary structure comprises 91 residues: Cell division topological specificity factor (91 aa).

The protein belongs to the MinE family.

Prevents the cell division inhibition by proteins MinC and MinD at internal division sites while permitting inhibition at polar sites. This ensures cell division at the proper site by restricting the formation of a division septum at the midpoint of the long axis of the cell. This chain is Cell division topological specificity factor, found in Bradyrhizobium diazoefficiens (strain JCM 10833 / BCRC 13528 / IAM 13628 / NBRC 14792 / USDA 110).